The chain runs to 384 residues: Deoxyguanosinetriphosphate triphosphohydrolase-like protein (384 aa).

A disordered region spans residues 12–39 (ELASYASDPSKTRGRRHSEPPPENRTEF). Basic and acidic residues predominate over residues 28 to 39 (HSEPPPENRTEF). The HD domain maps to 73 to 208 (RLTHSLEVAQ…ANLADEVAYN (136 aa)).

The protein belongs to the dGTPase family. Type 2 subfamily.

In Bordetella parapertussis (strain 12822 / ATCC BAA-587 / NCTC 13253), this protein is Deoxyguanosinetriphosphate triphosphohydrolase-like protein.